Reading from the N-terminus, the 106-residue chain is Vacuolar ATPase assembly integral membrane protein VMA21 homolog (106 aa).

Residues 1 to 26 are disordered; sequence MSNKNKKSGGAGNGAAQKQTRQQSHD. Topologically, residues 1–32 are cytoplasmic; sequence MSNKNKKSGGAGNGAAQKQTRQQSHDSQDYSS. A helical membrane pass occupies residues 33 to 53; sequence FKIVLFYCMLIVFLPVVTFFL. Topologically, residues 54 to 69 are lumenal; the sequence is LKGFVLDRFFSLSEVK. Residues 70-90 form a helical membrane-spanning segment; it reads VNIASAVGAVVSLHIALGLYI. Topologically, residues 91–106 are cytoplasmic; sequence YRAYFGATGSKAVKED.

The protein belongs to the VMA21 family.

It localises to the endoplasmic reticulum membrane. Its subcellular location is the endoplasmic reticulum-Golgi intermediate compartment membrane. The protein localises to the cytoplasmic vesicle. It is found in the COPII-coated vesicle membrane. Functionally, required for the assembly of the V0 complex of the vacuolar ATPase (V-ATPase) in the endoplasmic reticulum. The sequence is that of Vacuolar ATPase assembly integral membrane protein VMA21 homolog from Drosophila ananassae (Fruit fly).